A 446-amino-acid chain; its full sequence is Glutamyl-tRNA reductase (446 aa).

Substrate-binding positions include 49 to 52 (TCNR), Ser107, 112 to 114 (EPQ), and Gln118. Catalysis depends on Cys50, which acts as the Nucleophile. An NADP(+)-binding site is contributed by 187 to 192 (GAGETI). The disordered stretch occupies residues 417–446 (NANEDTRESVDKEQTGTTQGAARGDQRSTG). Over residues 420-430 (EDTRESVDKEQ) the composition is skewed to basic and acidic residues.

This sequence belongs to the glutamyl-tRNA reductase family. Homodimer.

The enzyme catalyses (S)-4-amino-5-oxopentanoate + tRNA(Glu) + NADP(+) = L-glutamyl-tRNA(Glu) + NADPH + H(+). It functions in the pathway porphyrin-containing compound metabolism; protoporphyrin-IX biosynthesis; 5-aminolevulinate from L-glutamyl-tRNA(Glu): step 1/2. Catalyzes the NADPH-dependent reduction of glutamyl-tRNA(Glu) to glutamate 1-semialdehyde (GSA). The protein is Glutamyl-tRNA reductase of Alkalilimnicola ehrlichii (strain ATCC BAA-1101 / DSM 17681 / MLHE-1).